Consider the following 358-residue polypeptide: UPF0324 membrane protein CT0845 (358 aa).

The next 10 membrane-spanning stretches (helical) occupy residues 36–53, 57–76, 83–105, 115–134, 146–168, 178–200, 244–261, 276–295, 307–325, and 335–357; these read YFPG…ATFL, YGAP…RFLS, LVGI…GMRI, VKPV…FGLA, GVLT…AAVL, TIFT…PVVA, LLRV…SLIF, LLPP…SLGV, VSRW…KTSL, and PVSI…VVWM.

Belongs to the UPF0324 family.

It localises to the cell membrane. The sequence is that of UPF0324 membrane protein CT0845 from Chlorobaculum tepidum (strain ATCC 49652 / DSM 12025 / NBRC 103806 / TLS) (Chlorobium tepidum).